The following is a 1081-amino-acid chain: Zinc finger protein 827 (1081 aa).

The span at 1-10 shows a compositional bias: basic and acidic residues; sequence MPRRKQEQPK. Residues 1–14 are mediates direct interaction with RBBP4; it reads MPRRKQEQPKRLPS. The segment at 1 to 77 is disordered; it reads MPRRKQEQPK…DTSLGSTTPS (77 aa). An RRK motif; mediates NuRD recruitment to telomeres motif is present at residues 3 to 5; the sequence is RRK. Over residues 62–77 the composition is skewed to polar residues; sequence EQSTSPDTSLGSTTPS. Glycyl lysine isopeptide (Lys-Gly) (interchain with G-Cter in SUMO2) cross-links involve residues K176, K216, and K226. Disordered regions lie at residues 259-278 and 307-348; these read KVSE…ASSF and SSLL…SLEL. Over residues 327–344 the composition is skewed to pro residues; sequence VTPPPPPPPPPPPPPPPQ. Glycyl lysine isopeptide (Lys-Gly) (interchain with G-Cter in SUMO2) cross-links involve residues K360 and K372. C2H2-type zinc fingers lie at residues 374 to 396, 402 to 424, and 433 to 455; these read FQCP…MVIH, HQCP…MKVH, and FQCQ…MRCH. Residues K466, K475, K523, K549, K580, K587, K597, K634, K639, and K658 each participate in a glycyl lysine isopeptide (Lys-Gly) (interchain with G-Cter in SUMO2) cross-link. K673 participates in a covalent cross-link: Glycyl lysine isopeptide (Lys-Gly) (interchain with G-Cter in SUMO1); alternate. A Glycyl lysine isopeptide (Lys-Gly) (interchain with G-Cter in SUMO2); alternate cross-link involves residue K673. Residues K704, K710, K742, K778, and K798 each participate in a glycyl lysine isopeptide (Lys-Gly) (interchain with G-Cter in SUMO2) cross-link. C2H2-type zinc fingers lie at residues 817–839 and 845–867; these read FPCD…LSLH and YKCH…LTVH. Glycyl lysine isopeptide (Lys-Gly) (interchain with G-Cter in SUMO2) cross-links involve residues K870 and K891. C2H2-type zinc fingers lie at residues 897-919 and 929-952; these read YSCH…MSLH and ICCT…GTKH. Basic and acidic residues predominate over residues 947-960; it reads HIGTKHTGEDRKTP. The interval 947-996 is disordered; the sequence is HIGTKHTGEDRKTPSESNSPSSSSLSALSDSANSKDDSDGSQKNKGGNNL. K958 participates in a covalent cross-link: Glycyl lysine isopeptide (Lys-Gly) (interchain with G-Cter in SUMO2). Residues 961 to 978 show a composition bias toward low complexity; it reads SESNSPSSSSLSALSDSA. Basic and acidic residues predominate over residues 979–988; sequence NSKDDSDGSQ. A Glycyl lysine isopeptide (Lys-Gly) (interchain with G-Cter in SUMO2) cross-link involves residue K1014. 2 C2H2-type zinc fingers span residues 1019-1041 and 1047-1069; these read FECV…LQIH and FECD…KKCH.

It belongs to the krueppel C2H2-type zinc-finger protein family. As to quaternary structure, part of a transcription inhibitory ribonucleoprotein complex composed at least of the circular RNA circZNF827, HNRNPK and HNRNPL. Interacts with the nucleosome remodeling and histone deacetylase/NuRD complex. Interacts with RBBP4; the interaction is direct and recruits RBBP4, a component of the NuRD complex, to telomeres.

Its subcellular location is the nucleus. It is found in the chromosome. The protein resides in the telomere. Its function is as follows. As part of a ribonucleoprotein complex composed at least of HNRNPK, HNRNPL and the circular RNA circZNF827 that nucleates the complex on chromatin, may negatively regulate the transcription of genes involved in neuronal differentiation. Could also recruit the nucleosome remodeling and histone deacetylase/NuRD complex to telomeric regions of chromosomes to regulate chromatin remodeling as part of telomere maintenance. The polypeptide is Zinc finger protein 827 (ZNF827) (Homo sapiens (Human)).